The primary structure comprises 377 residues: Geranylgeranyl transferase type-1 subunit beta (377 aa).

PFTB repeat units lie at residues 144–186, 193–234, 245–284, and 291–333; these read KEAC…YMLN, MKKA…CLMG, LNRI…KLLK, and FEKN…SLME. Geranylgeranyl diphosphate contacts are provided by residues 219–221 and 263–266; these read HGG and RPNK. Zn(2+) contacts are provided by aspartate 269 and cysteine 271. Residue 272-275 coordinates geranylgeranyl diphosphate; the sequence is YSFW. Residue histidine 321 participates in Zn(2+) binding.

Belongs to the protein prenyltransferase subunit beta family. In terms of assembly, heterodimer of FNTA and PGGT1B. PGGT1B mediates interaction with substrate peptides. Requires Zn(2+) as cofactor. Mg(2+) serves as cofactor.

It catalyses the reaction geranylgeranyl diphosphate + L-cysteinyl-[protein] = S-geranylgeranyl-L-cysteinyl-[protein] + diphosphate. Catalyzes the transfer of a geranylgeranyl moiety from geranylgeranyl diphosphate to a cysteine at the fourth position from the C-terminus of proteins with the C-terminal sequence Cys-aliphatic-aliphatic-X. Known substrates include RAC1, RAC2, RAP1A and RAP1B. This is Geranylgeranyl transferase type-1 subunit beta (Pggt1b) from Rattus norvegicus (Rat).